Here is a 315-residue protein sequence, read N- to C-terminus: Transaldolase (315 aa).

The active-site Schiff-base intermediate with substrate is the Lys-125.

This sequence belongs to the transaldolase family. Type 1 subfamily. As to quaternary structure, homodimer.

It localises to the cytoplasm. It catalyses the reaction D-sedoheptulose 7-phosphate + D-glyceraldehyde 3-phosphate = D-erythrose 4-phosphate + beta-D-fructose 6-phosphate. Its pathway is carbohydrate degradation; pentose phosphate pathway; D-glyceraldehyde 3-phosphate and beta-D-fructose 6-phosphate from D-ribose 5-phosphate and D-xylulose 5-phosphate (non-oxidative stage): step 2/3. In terms of biological role, transaldolase is important for the balance of metabolites in the pentose-phosphate pathway. The sequence is that of Transaldolase from Leptothrix cholodnii (strain ATCC 51168 / LMG 8142 / SP-6) (Leptothrix discophora (strain SP-6)).